Reading from the N-terminus, the 284-residue chain is Pantothenate synthetase (284 aa).

30 to 37 (MGNLHDGH) provides a ligand contact to ATP. The Proton donor role is filled by H37. Q61 is a binding site for (R)-pantoate. A beta-alanine-binding site is contributed by Q61. 149–152 (GEKD) is an ATP binding site. Q155 contributes to the (R)-pantoate binding site. ATP is bound by residues I178 and 186 to 189 (LSSR).

This sequence belongs to the pantothenate synthetase family. Homodimer.

The protein localises to the cytoplasm. It catalyses the reaction (R)-pantoate + beta-alanine + ATP = (R)-pantothenate + AMP + diphosphate + H(+). It functions in the pathway cofactor biosynthesis; (R)-pantothenate biosynthesis; (R)-pantothenate from (R)-pantoate and beta-alanine: step 1/1. Catalyzes the condensation of pantoate with beta-alanine in an ATP-dependent reaction via a pantoyl-adenylate intermediate. This chain is Pantothenate synthetase, found in Salmonella paratyphi B (strain ATCC BAA-1250 / SPB7).